A 129-amino-acid polypeptide reads, in one-letter code: MQLPSRGTDWIAPVLRLPRNAGRGLIWLYRHTLSPLVGYNCRHYPTCSMYGDEAIRKFGLWAGGWMTLARLLRCQPWGTSGIDLVPQTAPSRARWYLPWRYARWRGVNAPPPDVAEPCGCGSHSQLTPH.

The protein belongs to the UPF0161 family.

It localises to the cell inner membrane. Functionally, could be involved in insertion of integral membrane proteins into the membrane. This is Putative membrane protein insertion efficiency factor from Rhodopseudomonas palustris (strain TIE-1).